Here is an 835-residue protein sequence, read N- to C-terminus: Telomere length regulation protein TEL2 homolog (835 aa).

Disordered regions lie at residues 455 to 501 (SADC…LAPY) and 629 to 648 (LSHE…HSIR). A compositionally biased stretch (low complexity) spans 464 to 473 (ESSPSKSCPK). The segment covering 474 to 486 (AIEKSKMEAKADQ) has biased composition (basic and acidic residues). The segment covering 488–499 (SDSELDSDDDLA) has biased composition (acidic residues). Residues 636–648 (ESRSTGTGQHSIR) are compositionally biased toward polar residues.

The protein belongs to the TEL2 family.

Its subcellular location is the cytoplasm. It localises to the membrane. The protein resides in the nucleus. The protein localises to the chromosome. It is found in the telomere. Functionally, regulator of the DNA damage response (DDR). Part of the TTT complex that is required to stabilize protein levels of the phosphatidylinositol 3-kinase-related protein kinase (PIKK) family proteins. Promotes assembly, stabilizes and maintains the activity of TORC complexes, which regulate cell growth and survival in response to nutrient and hormonal signals. May be involved in telomere length regulation. The polypeptide is Telomere length regulation protein TEL2 homolog (telo2) (Xenopus laevis (African clawed frog)).